A 229-amino-acid polypeptide reads, in one-letter code: NAD(P)H-quinone oxidoreductase subunit K, chloroplastic (229 aa).

Positions 43, 44, 108, and 139 each coordinate [4Fe-4S] cluster.

Belongs to the complex I 20 kDa subunit family. As to quaternary structure, NDH is composed of at least 16 different subunits, 5 of which are encoded in the nucleus. [4Fe-4S] cluster serves as cofactor.

It is found in the plastid. Its subcellular location is the chloroplast thylakoid membrane. It carries out the reaction a plastoquinone + NADH + (n+1) H(+)(in) = a plastoquinol + NAD(+) + n H(+)(out). The catalysed reaction is a plastoquinone + NADPH + (n+1) H(+)(in) = a plastoquinol + NADP(+) + n H(+)(out). Its function is as follows. NDH shuttles electrons from NAD(P)H:plastoquinone, via FMN and iron-sulfur (Fe-S) centers, to quinones in the photosynthetic chain and possibly in a chloroplast respiratory chain. The immediate electron acceptor for the enzyme in this species is believed to be plastoquinone. Couples the redox reaction to proton translocation, and thus conserves the redox energy in a proton gradient. The polypeptide is NAD(P)H-quinone oxidoreductase subunit K, chloroplastic (Aethionema cordifolium (Lebanon stonecress)).